We begin with the raw amino-acid sequence, 252 residues long: Diphthine synthase (252 aa).

Residues Leu-9, Asp-85, Val-88, 113–114 (SI), Leu-165, Ala-204, and His-229 each bind S-adenosyl-L-methionine.

This sequence belongs to the diphthine synthase family. In terms of assembly, homodimer.

The enzyme catalyses 2-[(3S)-amino-3-carboxypropyl]-L-histidyl-[translation elongation factor 2] + 3 S-adenosyl-L-methionine = diphthine-[translation elongation factor 2] + 3 S-adenosyl-L-homocysteine + 3 H(+). It functions in the pathway protein modification; peptidyl-diphthamide biosynthesis. Its function is as follows. S-adenosyl-L-methionine-dependent methyltransferase that catalyzes the trimethylation of the amino group of the modified target histidine residue in translation elongation factor 2 (EF-2), to form an intermediate called diphthine. The three successive methylation reactions represent the second step of diphthamide biosynthesis. This chain is Diphthine synthase, found in Methanocorpusculum labreanum (strain ATCC 43576 / DSM 4855 / Z).